Consider the following 734-residue polypeptide: Threonine--tRNA ligase, cytoplasmic (734 aa).

The interval 1–41 (MSASEAGVTEQVKKLSVKDSSNDAVKPNKKENKKSKQQSLY) is disordered. Basic and acidic residues predominate over residues 11 to 30 (QVKKLSVKDSSNDAVKPNKK). A TGS domain is found at 69–135 (SMPRVPLKIV…EGEANEEIKL (67 aa)). Ser195 and Ser289 each carry phosphoserine. Phosphothreonine occurs at positions 297 and 381. Residues Ser453 and Ser457 each carry the phosphoserine modification. Position 460 is a phosphothreonine (Thr460). The residue at position 605 (Ser605) is a Phosphoserine.

The protein belongs to the class-II aminoacyl-tRNA synthetase family.

Its subcellular location is the cytoplasm. It catalyses the reaction tRNA(Thr) + L-threonine + ATP = L-threonyl-tRNA(Thr) + AMP + diphosphate + H(+). The protein is Threonine--tRNA ligase, cytoplasmic (THS1) of Saccharomyces cerevisiae (strain ATCC 204508 / S288c) (Baker's yeast).